The sequence spans 199 residues: Ribosome maturation factor RimM (199 aa).

The region spanning 100-195 is the PRC barrel domain; it reads ADEWYPKDLI…YLTLDPPGGL (96 aa).

The protein belongs to the RimM family. Binds ribosomal protein uS19.

The protein resides in the cytoplasm. In terms of biological role, an accessory protein needed during the final step in the assembly of 30S ribosomal subunit, possibly for assembly of the head region. Essential for efficient processing of 16S rRNA. May be needed both before and after RbfA during the maturation of 16S rRNA. It has affinity for free ribosomal 30S subunits but not for 70S ribosomes. In Bifidobacterium longum (strain DJO10A), this protein is Ribosome maturation factor RimM.